The sequence spans 274 residues: Penicillin-insensitive murein endopeptidase (274 aa).

The first 19 residues, 1 to 19, serve as a signal peptide directing secretion; that stretch reads MKKTAIALLAWFVSSASLA. Disulfide bonds link C44–C265, C187–C235, and C216–C223. Residues H110, H113, D120, D147, H150, and H211 each coordinate Zn(2+). Residues 225-274 form a disordered region; it reads DQPLPPPGDGCGAELQSWFEPPKPGTTKPEKKTPPPLPPSCQALLDEHVL.

It belongs to the peptidase M74 family. Dimer. Zn(2+) serves as cofactor.

Its subcellular location is the periplasm. Its function is as follows. Murein endopeptidase that cleaves the D-alanyl-meso-2,6-diamino-pimelyl amide bond that connects peptidoglycan strands. Likely plays a role in the removal of murein from the sacculus. In Salmonella choleraesuis (strain SC-B67), this protein is Penicillin-insensitive murein endopeptidase.